Consider the following 924-residue polypeptide: Protein argonaute 4 (924 aa).

Disordered stretches follow at residues 1–37 (MDST…PPNV) and 159–185 (TRAN…RRPN). Positions 26 to 37 (LPPPPPVIPPNV) are enriched in pro residues. Positions 162-173 (NGNGSPNGNESP) are enriched in low complexity. The region spanning 292-408 (PVVDFLIANQ…IPLELCALVP (117 aa)) is the PAZ domain. One can recognise a Piwi domain in the interval 577-885 (FILCVLPDKK…AAAQLGTFMK (309 aa)). Positions 584–591 (DKKNSDLY) match the Nuclear localization signal motif.

It belongs to the argonaute family. Ago subfamily. Interacts with NRPE1 (via C-terminus). Binding to NRPE1 is required for its function in RdDM. Interacts with turnip crinkle virus (TCV) capsid protein P38; this interaction inhibits probably RNA silencing ability of AGO4. Interacts with SDE3. Binds to RDM3. Binds chromatin at loci subject to transcriptional silencing. Interacts with MBD6. As to expression, expressed in embryos, mature leaves, vascular tissue of the sepals, stamens and stigma, at the tip of the style and siliques.

Its subcellular location is the nucleus. It is found in the nucleolus. The protein resides in the nucleoplasm. It localises to the cajal body. Functionally, together with RDM3, required for transcriptional gene silencing (TGS) by DNA methylation and repressive histone modifications (H3K9me2) of several chromatin loci. Component of the RISC complex that associate with the small interfering RNA (siRNA) pathway involved in direct cytosine methylation at endogenous DNA repeats. Forms a AGO4/NRPE1/siRNA complex in cajal body, facilitating its function in RNA-directed gene silencing of target loci. Required for CpNpG and asymmetric DNA methylation as well as histone H3 'Lys-9' methylation (H3K9me) at SUP and SN1 loci. May be not required for CpG methylation. Required for the production and maintenance of retrotransposon SN1 and Copia and ribosomal 5S 25 nucleotide siRNAs specialized in gene silencing at chromatin level. Involved in de novo methylation of FWA gene and required for the maintenance of RNA-directed DNA methylation (RdDM) triggered by inverted repeat transgenes. Interacts with miRNA miR390 and miR172, targeting respectively TAS3 and AP2 mRNAs, and mediates cleavage of miRNA targets. Associates mainly with small RNAs of 24 nucleotide in length and preferentially recruits small RNAs with a 5' terminal adenosine. Targeted by the turnip yellows virus (TuYV) protein P0 (via F-box-like domain) for probable proteasome degradation and thereby inactivating AGO4 function in RNA silencing. Required for resistance to the bacterial pathogen P.syringae. Works independently of the RdDM pathway in mediating resistance to P.syringae. RdDM is involved in viral genome methylation as an epigenetic defense against geminiviruses. The polypeptide is Protein argonaute 4 (Arabidopsis thaliana (Mouse-ear cress)).